The following is a 243-amino-acid chain: NifU-like scaffold protein (243 aa).

The protein belongs to the NifU family. As to quaternary structure, homodimer.

It localises to the plastid. It is found in the apicoplast. It functions in the pathway cofactor biosynthesis; iron-sulfur cluster biosynthesis. Its function is as follows. Binds and transfers [4Fe-4S] iron-sulfur clusters to target proteins. The polypeptide is NifU-like scaffold protein (Plasmodium berghei (strain Anka)).